Reading from the N-terminus, the 195-residue chain is Imidazoleglycerol-phosphate dehydratase (195 aa).

The protein belongs to the imidazoleglycerol-phosphate dehydratase family.

The protein localises to the cytoplasm. It catalyses the reaction D-erythro-1-(imidazol-4-yl)glycerol 3-phosphate = 3-(imidazol-4-yl)-2-oxopropyl phosphate + H2O. Its pathway is amino-acid biosynthesis; L-histidine biosynthesis; L-histidine from 5-phospho-alpha-D-ribose 1-diphosphate: step 6/9. The sequence is that of Imidazoleglycerol-phosphate dehydratase from Trichlorobacter lovleyi (strain ATCC BAA-1151 / DSM 17278 / SZ) (Geobacter lovleyi).